A 126-amino-acid polypeptide reads, in one-letter code: Glycine cleavage system H protein (126 aa).

Residues 22–104 (TVTIGITEYA…YEKAWMVKVK (83 aa)) form the Lipoyl-binding domain. Lys-63 is subject to N6-lipoyllysine.

Belongs to the GcvH family. As to quaternary structure, the glycine cleavage system is composed of four proteins: P, T, L and H. It depends on (R)-lipoate as a cofactor.

The glycine cleavage system catalyzes the degradation of glycine. The H protein shuttles the methylamine group of glycine from the P protein to the T protein. In terms of biological role, is also involved in protein lipoylation via its role as an octanoyl/lipoyl carrier protein intermediate. The chain is Glycine cleavage system H protein from Staphylococcus carnosus (strain TM300).